The following is a 141-amino-acid chain: Hemoglobin subunit alpha-1/2 (141 aa).

Residues Val1–Arg141 enclose the Globin domain. Ser3 is subject to Phosphoserine. Lys7 carries the N6-succinyllysine modification. Thr8 is modified (phosphothreonine). Residue Lys11 is modified to N6-succinyllysine. N6-acetyllysine; alternate is present on Lys16. Lys16 is subject to N6-succinyllysine; alternate. Position 24 is a phosphotyrosine (Tyr24). Lys40 bears the N6-succinyllysine mark. The residue at position 49 (Ser49) is a Phosphoserine. His58 serves as a coordination point for O2. A heme b-binding site is contributed by His87. The residue at position 102 (Ser102) is a Phosphoserine. Thr108 carries the post-translational modification Phosphothreonine. At Ser124 the chain carries Phosphoserine. A phosphothreonine mark is found at Thr134 and Thr137. Ser138 is subject to Phosphoserine.

It belongs to the globin family. Heterotetramer of two alpha chains and two beta chains. In terms of tissue distribution, red blood cells.

Functionally, involved in oxygen transport from the lung to the various peripheral tissues. The protein is Hemoglobin subunit alpha-1/2 of Leptonychotes weddellii (Weddell seal).